Here is a 248-residue protein sequence, read N- to C-terminus: PF03932 family protein CutC (248 aa).

This sequence belongs to the CutC family. Homodimer.

The protein localises to the cytoplasm. In Escherichia coli O81 (strain ED1a), this protein is PF03932 family protein CutC.